The sequence spans 312 residues: 4-diphosphocytidyl-2-C-methyl-D-erythritol kinase (312 aa).

Lys16 is an active-site residue. 101-111 (PIGAGLAGGSS) contacts ATP. The active site involves Asp143.

It belongs to the GHMP kinase family. IspE subfamily.

The enzyme catalyses 4-CDP-2-C-methyl-D-erythritol + ATP = 4-CDP-2-C-methyl-D-erythritol 2-phosphate + ADP + H(+). The protein operates within isoprenoid biosynthesis; isopentenyl diphosphate biosynthesis via DXP pathway; isopentenyl diphosphate from 1-deoxy-D-xylulose 5-phosphate: step 3/6. Its function is as follows. Catalyzes the phosphorylation of the position 2 hydroxy group of 4-diphosphocytidyl-2C-methyl-D-erythritol. The sequence is that of 4-diphosphocytidyl-2-C-methyl-D-erythritol kinase from Prochlorococcus marinus (strain MIT 9515).